The chain runs to 474 residues: MNAAATKLPTQLGSIHFVGIGGIGMSGIAEVLLNHGYDVQGSDLKASPITERLERLGARVFVGQQAENLEGAEVVVISSAIKPGNPEYDAARLRGLPIVRRAEMLAELMRLRSNIAVGGTHGKTTTTTMVATLLDHGGVDPTVINGGIIHAYGSNARVGQGDWMVVEADESDGTFNRLPATIAIVTNIDPEHMEHWGTIENLRQGFLDFVSNIPFYGLAVCCTDHPEVQTLVGKITDRRVVTFGFNAQADVRAVNLHYRAGVACFDIALQSEDILIEGCTLPMPGDHNVSNALAAVAVARHLGMKADEIREALDGFKGVNRRFTKVGEVGGITVIDDYGHHPVEIAAVLKAARQASDGRVIAVHQPHRYSRLHSLFDDFCGCFSEADVVAIAEVYAAGEDPIEGASRDDLVAGMIRHGHRHARAILDEDDLERLVREQARPGDMVVCLGAGTISAWANGLPARLSDLDKTAATG.

ATP is bound at residue 119 to 125; that stretch reads GTHGKTT.

The protein belongs to the MurCDEF family.

It localises to the cytoplasm. The catalysed reaction is UDP-N-acetyl-alpha-D-muramate + L-alanine + ATP = UDP-N-acetyl-alpha-D-muramoyl-L-alanine + ADP + phosphate + H(+). It participates in cell wall biogenesis; peptidoglycan biosynthesis. In terms of biological role, cell wall formation. This chain is UDP-N-acetylmuramate--L-alanine ligase, found in Jannaschia sp. (strain CCS1).